A 502-amino-acid chain; its full sequence is Large ribosomal subunit protein uL2m (502 aa).

The interval 458 to 502 is disordered; that stretch reads AMNPVDHPHGGGEGRTKGGRPSVSPWGKPTKAGFRAGVGVGKRRI. A compositionally biased stretch (basic and acidic residues) spans 463–473; sequence DHPHGGGEGRT. The segment covering 493–502 has biased composition (gly residues); sequence AGVGVGKRRI.

It belongs to the universal ribosomal protein uL2 family.

It localises to the mitochondrion. This Oryza sativa (Rice) protein is Large ribosomal subunit protein uL2m (RPL2).